Reading from the N-terminus, the 142-residue chain is Large ribosomal subunit protein uL11 (142 aa).

It belongs to the universal ribosomal protein uL11 family. In terms of assembly, part of the ribosomal stalk of the 50S ribosomal subunit. Interacts with L10 and the large rRNA to form the base of the stalk. L10 forms an elongated spine to which L12 dimers bind in a sequential fashion forming a multimeric L10(L12)X complex. In terms of processing, one or more lysine residues are methylated.

Functionally, forms part of the ribosomal stalk which helps the ribosome interact with GTP-bound translation factors. This chain is Large ribosomal subunit protein uL11, found in Hamiltonella defensa subsp. Acyrthosiphon pisum (strain 5AT).